Reading from the N-terminus, the 144-residue chain is D-aminoacyl-tRNA deacylase (144 aa).

Residues 136–137 carry the Gly-cisPro motif, important for rejection of L-amino acids motif; that stretch reads GP.

It belongs to the DTD family. In terms of assembly, homodimer.

The protein resides in the cytoplasm. It carries out the reaction glycyl-tRNA(Ala) + H2O = tRNA(Ala) + glycine + H(+). The enzyme catalyses a D-aminoacyl-tRNA + H2O = a tRNA + a D-alpha-amino acid + H(+). Functionally, an aminoacyl-tRNA editing enzyme that deacylates mischarged D-aminoacyl-tRNAs. Also deacylates mischarged glycyl-tRNA(Ala), protecting cells against glycine mischarging by AlaRS. Acts via tRNA-based rather than protein-based catalysis; rejects L-amino acids rather than detecting D-amino acids in the active site. By recycling D-aminoacyl-tRNA to D-amino acids and free tRNA molecules, this enzyme counteracts the toxicity associated with the formation of D-aminoacyl-tRNA entities in vivo and helps enforce protein L-homochirality. In Vibrio parahaemolyticus serotype O3:K6 (strain RIMD 2210633), this protein is D-aminoacyl-tRNA deacylase.